The sequence spans 449 residues: UDP-glycosyltransferase 76E6 (449 aa).

UDP-alpha-D-glucose contacts are provided by residues Ser274, 333–335 (APQ), 350–358 (HCGWNSTLE), and 372–375 (HGEQ).

This sequence belongs to the UDP-glycosyltransferase family.

This Arabidopsis thaliana (Mouse-ear cress) protein is UDP-glycosyltransferase 76E6 (UGT76E6).